Reading from the N-terminus, the 128-residue chain is UPF0102 protein Mext_0406 (128 aa).

It belongs to the UPF0102 family.

The chain is UPF0102 protein Mext_0406 from Methylorubrum extorquens (strain PA1) (Methylobacterium extorquens).